The primary structure comprises 211 residues: MPTQAANEALAILRDASQFQWYVITLLLVVIYIYASEIHQKNYRAVFAGLAFWGMDWFNEIWNALVFHFTNYAAVWMAPGKTAYLILIGLNIEISMMFAIMGVAATKLLPEDRKAKIFGINNRIFYAIVLSAACVVVEIILNAANVLVWEYWWWNAKMPLLIFLIGYLPFFLVAYWVYDMDLVEKQAAVSFGILAIDAVLLIVFAGLMEWI.

6 helical membrane passes run 21–38, 53–75, 82–104, 124–146, 159–178, and 188–210; these read WYVI…ASEI, WGMD…YAAV, TAYL…MGVA, IFYA…AANV, PLLI…YWVY, and AVSF…LMEW.

The protein localises to the cell membrane. This is an uncharacterized protein from Archaeoglobus fulgidus (strain ATCC 49558 / DSM 4304 / JCM 9628 / NBRC 100126 / VC-16).